A 347-amino-acid polypeptide reads, in one-letter code: Quinolinate synthase (347 aa).

Positions 47 and 68 each coordinate iminosuccinate. C113 provides a ligand contact to [4Fe-4S] cluster. Residues 139–141 (YAN) and S156 contribute to the iminosuccinate site. A [4Fe-4S] cluster-binding site is contributed by C200. Iminosuccinate-binding positions include 226–228 (HPE) and T243. Position 297 (C297) interacts with [4Fe-4S] cluster.

This sequence belongs to the quinolinate synthase family. Type 1 subfamily. [4Fe-4S] cluster serves as cofactor.

Its subcellular location is the cytoplasm. The enzyme catalyses iminosuccinate + dihydroxyacetone phosphate = quinolinate + phosphate + 2 H2O + H(+). It participates in cofactor biosynthesis; NAD(+) biosynthesis; quinolinate from iminoaspartate: step 1/1. In terms of biological role, catalyzes the condensation of iminoaspartate with dihydroxyacetone phosphate to form quinolinate. The sequence is that of Quinolinate synthase from Escherichia coli (strain K12 / MC4100 / BW2952).